A 586-amino-acid chain; its full sequence is Acyl-coenzyme A synthetase ACSM3, mitochondrial (586 aa).

Residues 1 to 27 (MLACVTMKMLRHAKCFQRLAIFGSVRA) constitute a mitochondrion transit peptide. N6-succinyllysine occurs at positions 73 and 106. Lysine 157 carries the N6-acetyllysine modification. Residues 235 to 243 (TSGTSGYPK), 374 to 379 (EGYGQT), aspartate 461, arginine 476, and lysine 572 each bind ATP.

The protein belongs to the ATP-dependent AMP-binding enzyme family. It depends on Mg(2+) as a cofactor. The cofactor is Mn(2+).

It is found in the mitochondrion. Its subcellular location is the mitochondrion matrix. The enzyme catalyses a medium-chain fatty acid + ATP + CoA = a medium-chain fatty acyl-CoA + AMP + diphosphate. It catalyses the reaction propanoate + ATP + CoA = propanoyl-CoA + AMP + diphosphate. It carries out the reaction butanoate + ATP + CoA = butanoyl-CoA + AMP + diphosphate. The catalysed reaction is 2-methylpropanoate + ATP + CoA = 2-methylpropanoyl-CoA + AMP + diphosphate. The enzyme catalyses 2-methylbutanoate + ATP + CoA = 2-methylbutanoyl-CoA + AMP + diphosphate. It catalyses the reaction octanoate + ATP + CoA = octanoyl-CoA + AMP + diphosphate. Catalyzes the activation of fatty acids by CoA to produce an acyl-CoA, the first step in fatty acid metabolism. Capable of activating medium-chain fatty acids with a preference for isobutyrate among fatty acids with 2-6 carbon atoms. In Pongo abelii (Sumatran orangutan), this protein is Acyl-coenzyme A synthetase ACSM3, mitochondrial (ACSM3).